The following is a 206-amino-acid chain: Dihydrofolate reductase (206 aa).

In terms of domain architecture, DHFR spans 6 to 204; it reads SLTLIVALTT…FDYEFEMWTR (199 aa). Residues Ala-12 and 18–24 contribute to the NADP(+) site; that span reads GIGRSNS. 32–37 contributes to the substrate binding site; that stretch reads EISYFK. 59-61 lines the NADP(+) pocket; sequence RKT. Arg-75 lines the substrate pocket. NADP(+) is bound by residues 81 to 83 and 124 to 131; these read TRN and GGAQLYKA.

Belongs to the dihydrofolate reductase family.

The catalysed reaction is (6S)-5,6,7,8-tetrahydrofolate + NADP(+) = 7,8-dihydrofolate + NADPH + H(+). It participates in cofactor biosynthesis; tetrahydrofolate biosynthesis; 5,6,7,8-tetrahydrofolate from 7,8-dihydrofolate: step 1/1. Functionally, key enzyme in folate metabolism. Catalyzes an essential reaction for de novo glycine and purine synthesis, and for DNA precursor synthesis. In Pneumocystis carinii, this protein is Dihydrofolate reductase.